The chain runs to 336 residues: Retinol dehydrogenase 14 (336 aa).

T5 carries the phosphothreonine modification. 50 to 56 (GANSGLG) contacts NADP(+). S192 serves as a coordination point for substrate. Catalysis depends on Y217, which acts as the Proton acceptor.

This sequence belongs to the short-chain dehydrogenases/reductases (SDR) family. In terms of tissue distribution, widely expressed.

It catalyses the reaction all-trans-retinol + NADP(+) = all-trans-retinal + NADPH + H(+). The enzyme catalyses 9-cis-retinol + NADP(+) = 9-cis-retinal + NADPH + H(+). The catalysed reaction is 11-cis-retinol + NADP(+) = 11-cis-retinal + NADPH + H(+). It functions in the pathway cofactor metabolism; retinol metabolism. Retinol dehydrogenase with a clear preference for NADP. Displays high activity towards 9-cis, 11-cis and all-trans-retinol. Shows a very weak activity towards 13-cis-retinol. Has no activity towards steroid. This chain is Retinol dehydrogenase 14 (RDH14), found in Homo sapiens (Human).